A 398-amino-acid chain; its full sequence is Lysophospholipid transporter LplT (398 aa).

11 helical membrane passes run 17-37, 52-72, 90-110, 137-157, 163-183, 226-246, 256-276, 285-305, 309-329, 352-372, and 373-393; these read AVLVSQFFSAFADNALLFAIL, ILQIVFVLAYILLAPFVGQIA, LGAFTICLGYDPFLGYALVGV, GLMEASTIIAILTGSVVGGFL, AIALLVCALMYGIAVVANFFI, LFWGAGITLRFLLVLWVPVVL, ILNVMVAVGIIIGAGAAARFI, MPAGVLIGVMVVIFAVQHSIW, VLLIILGIFGGLFIVPLNALL, IAMLLMLGLYSLVIKIGVPVV, and TTGIGFGTLLALTITSLWIWN.

The protein belongs to the major facilitator superfamily. LplT (TC 2.A.1.42) family.

The protein resides in the cell inner membrane. Functionally, catalyzes the facilitated diffusion of 2-acyl-glycero-3-phosphoethanolamine (2-acyl-GPE) into the cell. This chain is Lysophospholipid transporter LplT, found in Photorhabdus laumondii subsp. laumondii (strain DSM 15139 / CIP 105565 / TT01) (Photorhabdus luminescens subsp. laumondii).